The following is an 88-amino-acid chain: Protein A19 homolog (88 aa).

The segment at 1–28 (MADSTAGAKKRKKRSTSATSTRKEPPTV) is disordered.

This sequence belongs to the chordopoxvirinae A19 family.

The chain is Protein A19 homolog from Fowlpox virus (strain NVSL) (FPV).